The primary structure comprises 493 residues: GPI alpha-1,6-mannosyltransferase 2 (493 aa).

The Cytoplasmic segment spans residues 1–13 (MGLLDPSQKEVLR). Residues 14 to 34 (FAVNCRILTLVLQALFNLIIP) traverse the membrane as a helical segment. The Lumenal portion of the chain corresponds to 35–77 (DHHADAFCPPRLAPSGSADQLVEGLLGGLSRWDAEHFLFIAEH). The chain crosses the membrane as a helical span at residues 78 to 98 (GYLYEHNFAFFPGFPLALLMG). Residues 99-113 (TELLRPLQGLLSQRS) lie on the Cytoplasmic side of the membrane. A helical transmembrane segment spans residues 114 to 134 (CLLVSVALLNLLFSVLAAVAL). Residues 135-136 (HD) are Lumenal-facing. The helical transmembrane segment at 137–157 (LGCLVLHCPRQALCAALLFCI) threads the bilayer. The Cytoplasmic segment spans residues 158-161 (SPAN). The chain crosses the membrane as a helical span at residues 162-182 (VFLAAGYSEALFAFLTFSAMG). Over 183–192 (QLERGRGWAS) the chain is Lumenal. A helical membrane pass occupies residues 193-213 (GLLFALAAGVRSNGLVSLGFL). At 214-234 (LHSQCRGFCSSLAVLSPWKPL) the chain is on the cytoplasmic side. The chain crosses the membrane as a helical span at residues 235 to 255 (VKLMASVCLSVLIVSLPFALF). Residues 256 to 327 (QYRAYIQFCS…RYYELKQVPN (72 aa)) lie on the Lumenal side of the membrane. A helical transmembrane segment spans residues 328-348 (FLLATPVTVLVVWATWTYVTT). Residues 349–378 (HPWLCLTLGLQRTKDRENPEKPHRGFLSPK) lie on the Cytoplasmic side of the membrane. The chain crosses the membrane as a helical span at residues 379-399 (VFVYLVHAAALLVFGGLCMHV). Over 400-469 (QVLTRFLASS…DWKRCSPVTR (70 aa)) the chain is Lumenal. The chain crosses the membrane as a helical span at residues 470–490 (CVLVYFLTYWLLGLILHCNFL). At 491–493 (PWT) the chain is on the cytoplasmic side.

This sequence belongs to the PIGV family. Post-translationally, not N-glycosylated.

The protein resides in the endoplasmic reticulum membrane. Its pathway is glycolipid biosynthesis; glycosylphosphatidylinositol-anchor biosynthesis. Functionally, alpha-1,6-mannosyltransferase that catalyzes the transfer of the second mannose, via an alpha-1,6 bond, from a dolichol-phosphate-mannose (Dol-P-Man) to the alpha-D-Man-(1-&gt;4)-alpha-D-GlcN-(1-&gt;6)-(1-radyl,2-acyl-sn-glycero-3-phospho)-2-acyl-inositol (also termed H2) intermediate to generate an alpha-D-Man-(1-&gt;6)-alpha-D-Man-(1-&gt;4)-alpha-D-GlcN-(1-&gt;6)-(1-radyl,2-acyl-sn-glycero-3-phospho)-2-acyl-inositol (also termed H3) and participates in the seventh step of the glycosylphosphatidylinositol-anchor biosynthesis. Also transfers the second mannose on a 2-PEtn-alpha-D-Man-(1-&gt;4)-alpha-D-GlcN-(1-&gt;6)-(1-radyl,2-acyl-sn-glycero-3-phospho)-2-acyl-inositol (also termed H5). In Mus musculus (Mouse), this protein is GPI alpha-1,6-mannosyltransferase 2.